Here is a 356-residue protein sequence, read N- to C-terminus: DNA polymerase IV (356 aa).

Residues 1 to 188 (MDTSRKIIHI…IPVTKFYGVG (188 aa)) enclose the UmuC domain. Residues Asp-11 and Asp-106 each contribute to the Mg(2+) site. Residue Glu-107 is part of the active site.

It belongs to the DNA polymerase type-Y family. In terms of assembly, monomer. It depends on Mg(2+) as a cofactor.

It localises to the cytoplasm. It catalyses the reaction DNA(n) + a 2'-deoxyribonucleoside 5'-triphosphate = DNA(n+1) + diphosphate. Functionally, poorly processive, error-prone DNA polymerase involved in untargeted mutagenesis. Copies undamaged DNA at stalled replication forks, which arise in vivo from mismatched or misaligned primer ends. These misaligned primers can be extended by PolIV. Exhibits no 3'-5' exonuclease (proofreading) activity. May be involved in translesional synthesis, in conjunction with the beta clamp from PolIII. The protein is DNA polymerase IV of Listeria monocytogenes serovar 1/2a (strain ATCC BAA-679 / EGD-e).